A 351-amino-acid chain; its full sequence is MLDRLKIIKQKYQDLQKLLLNEQNINQKIDILKNLSKLEPTVELFNRYLNLETEFTQIQTILKTQQDQELLLLAHQEKDTILSEKKTTLDQLKILLLPQDPFDKKNVVLEIKGASGGNEANLFAADLLRTYVKYAESKKWKVEILNLNPSIKGGLSSVELLISGKNIYSFLKYESGVHRVQRVPATEAQGRIHTSTAVVLVVPEAEELELKIDWHDIRTDTFNSSGPGGQSVNTTKSAVRLTHIPSGISVACQEGKSQHENKDKAFTILKTRIYNQMLTAKQEEENKHRKNLVGTGERSEKIRTYNYPQNRITDHRIGLTLQKLDIIMEGKLDLVIEPLIHEAQKEQLAQS.

An N5-methylglutamine modification is found at glutamine 230.

This sequence belongs to the prokaryotic/mitochondrial release factor family. Post-translationally, methylated by PrmC. Methylation increases the termination efficiency of RF1.

Its subcellular location is the cytoplasm. Its function is as follows. Peptide chain release factor 1 directs the termination of translation in response to the peptide chain termination codons UAG and UAA. The polypeptide is Peptide chain release factor 1 (Onion yellows phytoplasma (strain OY-M)).